Here is a 49-residue protein sequence, read N- to C-terminus: Large ribosomal subunit protein bL33B (49 aa).

This sequence belongs to the bacterial ribosomal protein bL33 family.

The polypeptide is Large ribosomal subunit protein bL33B (Limosilactobacillus fermentum (strain NBRC 3956 / LMG 18251) (Lactobacillus fermentum)).